Here is a 317-residue protein sequence, read N- to C-terminus: 1D-myo-inositol 2-acetamido-2-deoxy-alpha-D-glucopyranoside deacetylase (317 aa).

Zn(2+) is bound by residues His-15, Asp-18, and His-154. A disordered region spans residues Gln-289 to Ala-317.

Belongs to the MshB deacetylase family. Zn(2+) is required as a cofactor.

The catalysed reaction is 1D-myo-inositol 2-acetamido-2-deoxy-alpha-D-glucopyranoside + H2O = 1D-myo-inositol 2-amino-2-deoxy-alpha-D-glucopyranoside + acetate. Catalyzes the deacetylation of 1D-myo-inositol 2-acetamido-2-deoxy-alpha-D-glucopyranoside (GlcNAc-Ins) in the mycothiol biosynthesis pathway. The sequence is that of 1D-myo-inositol 2-acetamido-2-deoxy-alpha-D-glucopyranoside deacetylase from Segniliparus rotundus (strain ATCC BAA-972 / CDC 1076 / CIP 108378 / DSM 44985 / JCM 13578).